Consider the following 208-residue polypeptide: Histone H1t (208 aa).

The span at 1–12 shows a compositional bias: polar residues; the sequence is MSETAPAASSTL. Residues 1–39 are disordered; sequence MSETAPAASSTLVPAPVEKPSSKRRGKKPGLAPARKPRG. A Phosphoserine modification is found at Ser-9. The region spanning 38–111 is the H15 domain; that stretch reads RGFSVSKLIP…GASGSFKLSK (74 aa). Arg-56 bears the Citrulline mark. The segment at 95–208 is disordered; it reads LVQTKGTGAS…TDLRKAAGRK (114 aa). Basic residues predominate over residues 121-134; sequence KGKKSASAKAKKMG. Phosphoserine is present on Ser-141. Positions 143–154 are enriched in basic residues; that stretch reads KSSKTKAVKKPK. Position 156 is a phosphothreonine (Thr-156). 2 positions are modified to phosphoserine: Ser-163 and Ser-178. A compositionally biased stretch (basic and acidic residues) spans 199–208; it reads TDLRKAAGRK.

It belongs to the histone H1/H5 family. Post-translationally, phosphorylated in early spermatids. In terms of processing, citrullination at Arg-56 (H1R54ci) by PADI4 takes place within the DNA-binding site of H1 and results in its displacement from chromatin and global chromatin decondensation, thereby promoting pluripotency and stem cell maintenance. As to expression, testis-specific.

The protein localises to the nucleus. Its subcellular location is the chromosome. Testis-specific histone H1 that forms less compacted chromatin compared to other H1 histone subtypes. Formation of more relaxed chromatin may be required to promote chromatin architecture required for proper chromosome regulation during meiosis, such as homologous recombination. Histones H1 act as linkers that bind to nucleosomes and compact polynucleosomes into a higher-order chromatin configuration. The protein is Histone H1t of Mus musculus (Mouse).